We begin with the raw amino-acid sequence, 318 residues long: 4-hydroxy-3-methylbut-2-enyl diphosphate reductase (318 aa).

Cys-12 provides a ligand contact to [4Fe-4S] cluster. Residues His-41 and His-74 each coordinate (2E)-4-hydroxy-3-methylbut-2-enyl diphosphate. Dimethylallyl diphosphate-binding residues include His-41 and His-74. His-41 and His-74 together coordinate isopentenyl diphosphate. Cys-96 provides a ligand contact to [4Fe-4S] cluster. His-124 is a (2E)-4-hydroxy-3-methylbut-2-enyl diphosphate binding site. His-124 provides a ligand contact to dimethylallyl diphosphate. Residue His-124 participates in isopentenyl diphosphate binding. Glu-126 serves as the catalytic Proton donor. Thr-168 contributes to the (2E)-4-hydroxy-3-methylbut-2-enyl diphosphate binding site. Cys-198 contributes to the [4Fe-4S] cluster binding site. The (2E)-4-hydroxy-3-methylbut-2-enyl diphosphate site is built by Ser-226, Ser-227, Asn-228, and Ser-270. Dimethylallyl diphosphate contacts are provided by Ser-226, Ser-227, Asn-228, and Ser-270. Isopentenyl diphosphate contacts are provided by Ser-226, Ser-227, Asn-228, and Ser-270.

Belongs to the IspH family. It depends on [4Fe-4S] cluster as a cofactor.

The catalysed reaction is isopentenyl diphosphate + 2 oxidized [2Fe-2S]-[ferredoxin] + H2O = (2E)-4-hydroxy-3-methylbut-2-enyl diphosphate + 2 reduced [2Fe-2S]-[ferredoxin] + 2 H(+). The enzyme catalyses dimethylallyl diphosphate + 2 oxidized [2Fe-2S]-[ferredoxin] + H2O = (2E)-4-hydroxy-3-methylbut-2-enyl diphosphate + 2 reduced [2Fe-2S]-[ferredoxin] + 2 H(+). The protein operates within isoprenoid biosynthesis; dimethylallyl diphosphate biosynthesis; dimethylallyl diphosphate from (2E)-4-hydroxy-3-methylbutenyl diphosphate: step 1/1. It participates in isoprenoid biosynthesis; isopentenyl diphosphate biosynthesis via DXP pathway; isopentenyl diphosphate from 1-deoxy-D-xylulose 5-phosphate: step 6/6. In terms of biological role, catalyzes the conversion of 1-hydroxy-2-methyl-2-(E)-butenyl 4-diphosphate (HMBPP) into a mixture of isopentenyl diphosphate (IPP) and dimethylallyl diphosphate (DMAPP). Acts in the terminal step of the DOXP/MEP pathway for isoprenoid precursor biosynthesis. In Psychrobacter arcticus (strain DSM 17307 / VKM B-2377 / 273-4), this protein is 4-hydroxy-3-methylbut-2-enyl diphosphate reductase.